The following is a 325-amino-acid chain: Malate dehydrogenase (325 aa).

Residue 11 to 17 (GAAGHVS) participates in NAD(+) binding. Substrate-binding residues include arginine 92 and arginine 98. NAD(+) is bound by residues asparagine 105, glutamine 112, and 129-131 (VGN). Positions 131 and 162 each coordinate substrate. Histidine 187 (proton acceptor) is an active-site residue.

This sequence belongs to the LDH/MDH superfamily. MDH type 2 family.

It carries out the reaction (S)-malate + NAD(+) = oxaloacetate + NADH + H(+). In terms of biological role, catalyzes the reversible oxidation of malate to oxaloacetate. This is Malate dehydrogenase from Desulfotalea psychrophila (strain LSv54 / DSM 12343).